The primary structure comprises 289 residues: MKFKKVVLGMCLIASVLVFPVTIKANACCDEYLQTPAAPHDIDSKLPHKLSWSADNPTNTDVNTHYWLFKQAEKILAKDVNHMRANLMNELKKFDKQIAQGIYDADHKNPYYDTSTFLSHFYNPDRDNTYLPGFANAKITGAKYFNQSVTDYREGKFDTAFYKLGLAIHYYTDISQPMHANNFTAISYPPGYHCAYENYVDTIKHNYQATEDMVAKRFCSDDVKDWLYENAKRAKADYPKIVNAKTKKSYLVGNSEWKKDTVEPTGARLRDSQQTLAGFLEFWSKKTNE.

The first 25 residues, 1–25 (MKFKKVVLGMCLIASVLVFPVTIKA), serve as a signal peptide directing secretion. Positions 26–51 (NACCDEYLQTPAAPHDIDSKLPHKLS) are excised as a propeptide. Residues Trp-52, His-65, Asp-106, His-120, His-169, Asp-173, His-179, His-193, and Glu-197 each contribute to the Zn(2+) site. In terms of domain architecture, Zn-dependent PLC spans 52–289 (WSADNPTNTD…LEFWSKKTNE (238 aa)).

Belongs to the bacterial zinc-metallophospholipase C family. As to quaternary structure, forms monomers, dimers and higher order oligomers, but only the monomer is enzymatically active. Zn(2+) is required as a cofactor.

Its subcellular location is the secreted. The enzyme catalyses a 1,2-diacyl-sn-glycero-3-phosphocholine + H2O = phosphocholine + a 1,2-diacyl-sn-glycerol + H(+). The catalysed reaction is 1,2-dihexadecanoyl-sn-glycero-3-phosphocholine + H2O = 1,2-dihexadecanoyl-sn-glycerol + phosphocholine + H(+). It carries out the reaction 1-hexadecanoyl-2-(9Z-octadecenoyl)-sn-glycero-3-phosphocholine + H2O = 1-hexadecanoyl-2-(9Z-octadecenoyl)-sn-glycerol + phosphocholine + H(+). It catalyses the reaction 1,2-di-(9Z-octadecenoyl)-sn-glycero-3-phosphocholine + H2O = 1,2-di-(9Z-octadecenoyl)-sn-glycerol + phosphocholine + H(+). The enzyme catalyses a 1,2-diacyl-sn-glycero-3-phosphoethanolamine + H2O = phosphoethanolamine + a 1,2-diacyl-sn-glycerol + H(+). The catalysed reaction is 1,2-di-(9Z-octadecenoyl)-sn-glycero-3-phosphoethanolamine + H2O = phosphoethanolamine + 1,2-di-(9Z-octadecenoyl)-sn-glycerol + H(+). It carries out the reaction 1,2-dihexadecanoyl-sn-glycero-3-phosphoethanolamine + H2O = 1,2-dihexadecanoyl-sn-glycerol + phosphoethanolamine + H(+). It catalyses the reaction a 1,2-diacyl-sn-glycero-3-phospho-L-serine + H2O = O-phospho-L-serine + a 1,2-diacyl-sn-glycerol + H(+). The enzyme catalyses a 1,2-diacyl-sn-glycero-3-phosphoglycerol + H2O = glycerol 1-phosphate + a 1,2-diacyl-sn-glycerol + H(+). The catalysed reaction is a 1,2-diacyl-sn-glycero-3-phospho-(1D-myo-inositol) + H2O = 1D-myo-inositol 1-phosphate + a 1,2-diacyl-sn-glycerol + H(+). It carries out the reaction a sphingomyelin + H2O = phosphocholine + an N-acylsphing-4-enine + H(+). It catalyses the reaction a 1-O-(1Z-alkenyl)-2-acyl-sn-glycero-3-phosphoethanolamine + H2O = a 1-O-(1Z-alkenyl)-2-acyl-sn-glycerol + phosphoethanolamine + H(+). With respect to regulation, enzymatic activity of LmPC-PLC can be specifically inhibited by its propeptide added in trans. The tendency of the enzyme to oligomerize, which appears to largely attenuate the enzymatic activity, may be one of the mechanisms regulating phospholipase activity in the host cell during the different steps of the infection cycle of L.monocytogenes. Enzyme activity is inhibited by EDTA and o-phenanthroline in vitro. Major virulence factor whose phospholipase activity facilitates pore formation by the pore-forming toxin listeriolysin O (LLO), leading to vacuolar membrane disruption and vacuolar escape of L.monocytogenes, which enables the bacterium to spread in the host. Acts as a phospholipase C exhibiting broad substrate specificity, with the highest activities towards diacylglycerophospholipids with phosphocholine, phosphoserine, and phosphoethanolamine head groups, but less towards phosphoglycerol or phosphoinositol head groups. Is also able to hydrolyze sphingomyelin and plasmenylethanolamine. This is Phospholipase C from Listeria monocytogenes serovar 1/2a (strain ATCC BAA-679 / EGD-e).